We begin with the raw amino-acid sequence, 174 residues long: dCTP deaminase, dUMP-forming (174 aa).

DCTP contacts are provided by residues 93–98, aspartate 111, 119–121, glutamine 138, and tyrosine 151; these read RSSIGR and TLE. Glutamate 121 acts as the Proton donor/acceptor in catalysis.

It belongs to the dCTP deaminase family. Homotrimer.

The catalysed reaction is dCTP + 2 H2O = dUMP + NH4(+) + diphosphate. It functions in the pathway pyrimidine metabolism; dUMP biosynthesis; dUMP from dCTP: step 1/1. Functionally, bifunctional enzyme that catalyzes both the deamination of dCTP to dUTP and the hydrolysis of dUTP to dUMP without releasing the toxic dUTP intermediate. This chain is dCTP deaminase, dUMP-forming, found in Leptospira biflexa serovar Patoc (strain Patoc 1 / Ames).